A 235-amino-acid chain; its full sequence is MSVISMKQLLEAGVHFGHQTRRWNPKMKKYIFTERNGIYIIDLQKTVKKVEEAYNFVRELAANGGKILFVGTKKQAQESVKEEAERCDMFYVNQRWLGGTLTNFATIQKRIKRLREIEKMEEDGIFDVLPKKEVIRLKKEKERLEKFLGGIKDMKELPDALFVIDPRKERIAVAEARKLNIPIIGIVDTNCDPDEIDYVIPANDDAIRAVKLLTSKIADAVLEAKQGEEAAVAAE.

Belongs to the universal ribosomal protein uS2 family.

In Geobacillus kaustophilus (strain HTA426), this protein is Small ribosomal subunit protein uS2.